The chain runs to 652 residues: Ethylmalonyl-CoA mutase (652 aa).

The B12-binding domain maps to 519–647 (PLKFVVGKPG…MDIVGLVDRT (129 aa)). Residue His-532 participates in adenosylcob(III)alamin binding.

This sequence belongs to the methylmalonyl-CoA mutase family. As to quaternary structure, homodimer. The cofactor is adenosylcob(III)alamin.

It catalyses the reaction (2R)-ethylmalonyl-CoA = (2S)-methylsuccinyl-CoA. In terms of biological role, radical enzyme that catalyzes the transformation of (2R)-ethylmalonyl-CoA to (2S)-methylsuccinyl-CoA. Is involved in the ethylmalonyl-CoA pathway for acetyl-CoA assimilation required for R.sphaeroides growth on acetate as sole carbon source. Is highly specific for its substrate, ethylmalonyl-CoA, and accepts methylmalonyl-CoA only at 0.2% relative activity. In Cereibacter sphaeroides (strain ATCC 17023 / DSM 158 / JCM 6121 / CCUG 31486 / LMG 2827 / NBRC 12203 / NCIMB 8253 / ATH 2.4.1.) (Rhodobacter sphaeroides), this protein is Ethylmalonyl-CoA mutase.